A 229-amino-acid polypeptide reads, in one-letter code: MVKYLSQSEAINVDQELFNDYKFSVDQLMELAGLSCAHAISKCFPTDKYGRVLICCGPGNNGGDGLVCARHLALMGYTPTIYYPKPTAKPLYENLSHQCKLMEICRVEDCPAINEAASNFDLIVDALFGFSFKPPVRAEFVAIVELMQQTTLPIASVDIPSGWDVEKGKVNDSDLEPDLLISLTAPKICARNFKGRYHYLGGRFVPPALQRKYDLNLPTYPGNELCLKL.

One can recognise a YjeF N-terminal domain in the interval 10-217; sequence AINVDQELFN…ALQRKYDLNL (208 aa). 60 to 64 is a binding site for (6S)-NADPHX; that stretch reads NNGGD. Residues N61 and D125 each coordinate K(+). (6S)-NADPHX is bound by residues 129–135 and D158; that span reads GFSFKPP. Residue S161 participates in K(+) binding.

The protein belongs to the NnrE/AIBP family. The cofactor is K(+).

It catalyses the reaction (6R)-NADHX = (6S)-NADHX. It carries out the reaction (6R)-NADPHX = (6S)-NADPHX. Its function is as follows. Catalyzes the epimerization of the S- and R-forms of NAD(P)HX, a damaged form of NAD(P)H that is a result of enzymatic or heat-dependent hydration. This is a prerequisite for the S-specific NAD(P)H-hydrate dehydratase to allow the repair of both epimers of NAD(P)HX. The protein is NAD(P)H-hydrate epimerase of Drosophila ananassae (Fruit fly).